The sequence spans 127 residues: Putative adhesin P1-like protein MPN_203 (127 aa).

The disordered stretch occupies residues Thr70–Phe90.

It belongs to the adhesin P1 family.

The chain is Putative adhesin P1-like protein MPN_203 from Mycoplasma pneumoniae (strain ATCC 29342 / M129 / Subtype 1) (Mycoplasmoides pneumoniae).